A 733-amino-acid chain; its full sequence is Photosystem I P700 chlorophyll a apoprotein A2 (733 aa).

The next 8 helical transmembrane spans lie at 46–69 (IFAS…FHVA), 134–157 (LYLG…LHLQ), 174–198 (LNHH…HVAL), 272–290 (IAHH…GHMY), 329–352 (LHIQ…QHMY), 368–394 (AALY…IFFV), 416–438 (AIIS…LYIH), and 516–534 (FLVH…LILV). 2 residues coordinate [4Fe-4S] cluster: C558 and C567. 2 consecutive transmembrane segments (helical) span residues 574 to 595 (AFYL…YWHW) and 642 to 664 (LSVW…MFLI). H653, M661, and Y669 together coordinate chlorophyll a. W670 contacts phylloquinone. Residues 706–726 (LVGLVHFAVGYILTYAAFVIA) form a helical membrane-spanning segment.

The protein belongs to the PsaA/PsaB family. As to quaternary structure, the PsaA/B heterodimer binds the P700 chlorophyll special pair and subsequent electron acceptors. PSI consists of a core antenna complex that captures photons, and an electron transfer chain that converts photonic excitation into a charge separation. The eukaryotic PSI reaction center is composed of at least 11 subunits. The cofactor is P700 is a chlorophyll a/chlorophyll a' dimer, A0 is one or more chlorophyll a, A1 is one or both phylloquinones and FX is a shared 4Fe-4S iron-sulfur center..

It is found in the plastid. Its subcellular location is the chloroplast thylakoid membrane. It catalyses the reaction reduced [plastocyanin] + hnu + oxidized [2Fe-2S]-[ferredoxin] = oxidized [plastocyanin] + reduced [2Fe-2S]-[ferredoxin]. Functionally, psaA and PsaB bind P700, the primary electron donor of photosystem I (PSI), as well as the electron acceptors A0, A1 and FX. PSI is a plastocyanin/cytochrome c6-ferredoxin oxidoreductase, converting photonic excitation into a charge separation, which transfers an electron from the donor P700 chlorophyll pair to the spectroscopically characterized acceptors A0, A1, FX, FA and FB in turn. Oxidized P700 is reduced on the lumenal side of the thylakoid membrane by plastocyanin or cytochrome c6. In Trieres chinensis (Marine centric diatom), this protein is Photosystem I P700 chlorophyll a apoprotein A2.